The primary structure comprises 243 residues: Proteasome subunit beta (243 aa).

Residues 1–46 (MFNPNNGSEFARNRARLDDTPNPYEPEVGSLPEGDRSQAGSDTVNK) form a disordered region. The propeptide at 1–48 (MFNPNNGSEFARNRARLDDTPNPYEPEVGSLPEGDRSQAGSDTVNKTG) is removed in mature form; by autocatalysis. T49 serves as the catalytic Nucleophile.

This sequence belongs to the peptidase T1B family. The 20S proteasome core is composed of 14 alpha and 14 beta subunits that assemble into four stacked heptameric rings, resulting in a barrel-shaped structure. The two inner rings, each composed of seven catalytic beta subunits, are sandwiched by two outer rings, each composed of seven alpha subunits. The catalytic chamber with the active sites is on the inside of the barrel. Has a gated structure, the ends of the cylinder being occluded by the N-termini of the alpha-subunits. Is capped at one or both ends by the proteasome regulatory ATPase, PAN.

The protein resides in the cytoplasm. It catalyses the reaction Cleavage of peptide bonds with very broad specificity.. The formation of the proteasomal ATPase PAN-20S proteasome complex, via the docking of the C-termini of PAN into the intersubunit pockets in the alpha-rings, triggers opening of the gate for substrate entry. Interconversion between the open-gate and close-gate conformations leads to a dynamic regulation of the 20S proteasome proteolysis activity. In terms of biological role, component of the proteasome core, a large protease complex with broad specificity involved in protein degradation. In Halobacterium salinarum (strain ATCC 29341 / DSM 671 / R1), this protein is Proteasome subunit beta.